The sequence spans 36 residues: Pancreatic polypeptide (36 aa).

Tyr-36 is modified (tyrosine amide).

It belongs to the NPY family.

The protein localises to the secreted. Functionally, hormone secreted by pancreatic cells that acts as a regulator of pancreatic and gastrointestinal functions. The chain is Pancreatic polypeptide (PPY) from Larus argentatus (Herring gull).